The following is a 1018-amino-acid chain: Serine/threonine-protein phosphatase BSL2 (1018 aa).

Positions 1-75 (MDEDSSMVAD…AAAVVGQEQQ (75 aa)) are disordered. A compositionally biased stretch (pro residues) spans 41 to 57 (SPPPEGGSVPTPPPSDP). Low complexity predominate over residues 63 to 75 (QQQAAAVVGQEQQ). Kelch repeat units follow at residues 149–195 (TSAG…VATA), 253–301 (YLMA…TASA), 306–356 (LLLL…VFVN), 362–409 (SGGA…DAAG), and 430–479 (LIFI…RLPG). The disordered stretch occupies residues 569-590 (DRDCGAEATPSGKPTFSLIKPD). Residue S627 is modified to Phosphoserine. The Mn(2+) site is built by D720, H722, D754, and N786. H787 (proton donor) is an active-site residue. The Mn(2+) site is built by H839 and H918. S975 carries the post-translational modification Phosphoserine. Over residues 994 to 1011 (ANRPATPTRGRPQNSNDR) the composition is skewed to polar residues. The tract at residues 994–1018 (ANRPATPTRGRPQNSNDRGGSLAWM) is disordered.

It belongs to the PPP phosphatase family. BSU subfamily. Interacts with BSK8. Mn(2+) serves as cofactor. Expressed throughout the plant, with a higher level in younger parts.

The protein resides in the cytoplasm. It is found in the cell membrane. It localises to the nucleus. It catalyses the reaction O-phospho-L-seryl-[protein] + H2O = L-seryl-[protein] + phosphate. It carries out the reaction O-phospho-L-threonyl-[protein] + H2O = L-threonyl-[protein] + phosphate. Phosphatase involved in elongation process, probably by acting as a regulator of brassinolide signaling. This chain is Serine/threonine-protein phosphatase BSL2 (BSL2), found in Arabidopsis thaliana (Mouse-ear cress).